Reading from the N-terminus, the 220-residue chain is Ktr system potassium uptake protein A (220 aa).

The RCK N-terminal domain occupies D5–I121. ATP is bound by residues R15, D35 to N37, N55 to C56, I77 to A79, K102 to N104, and E124. The region spanning K138–L220 is the RCK C-terminal domain.

Belongs to the KtrA potassium transport family. The uptake system is composed of KtrA and KtrB.

The protein localises to the cell inner membrane. With respect to regulation, requires both ATP and a high membrane potential for activity. Binding of ATP causes a conformational change in KtrA, which promotes formation of the KtrAB complex. Can also bind, with lower affinity, other nucleotides such as NADH or NAD(+), but only ATP can induce a conformational change. In terms of biological role, part of the Na(+)-dependent high affinity K(+) uptake system KtrAB. KtrA is the regulatory subunit and plays an important role in the substrate specificity and transport mechanism of the system. Binds ATP but lacks ATPase activity. The sequence is that of Ktr system potassium uptake protein A (ktrA) from Vibrio alginolyticus.